The chain runs to 379 residues: Lipoyl synthase 1, mitochondrial (379 aa).

[4Fe-4S] cluster contacts are provided by Cys106, Cys111, Cys117, Cys137, Cys141, Cys144, and Ser352. Residues 122–341 form the Radical SAM core domain; sequence EHGTQTATIM…EERGNELGFL (220 aa).

The protein belongs to the radical SAM superfamily. Lipoyl synthase family. [4Fe-4S] cluster serves as cofactor.

It localises to the mitochondrion. The catalysed reaction is [[Fe-S] cluster scaffold protein carrying a second [4Fe-4S](2+) cluster] + N(6)-octanoyl-L-lysyl-[protein] + 2 oxidized [2Fe-2S]-[ferredoxin] + 2 S-adenosyl-L-methionine + 4 H(+) = [[Fe-S] cluster scaffold protein] + N(6)-[(R)-dihydrolipoyl]-L-lysyl-[protein] + 4 Fe(3+) + 2 hydrogen sulfide + 2 5'-deoxyadenosine + 2 L-methionine + 2 reduced [2Fe-2S]-[ferredoxin]. It functions in the pathway protein modification; protein lipoylation via endogenous pathway; protein N(6)-(lipoyl)lysine from octanoyl-[acyl-carrier-protein]: step 2/2. Functionally, catalyzes the radical-mediated insertion of two sulfur atoms into the C-6 and C-8 positions of the octanoyl moiety bound to the lipoyl domains of lipoate-dependent enzymes, thereby converting the octanoylated domains into lipoylated derivatives. The sequence is that of Lipoyl synthase 1, mitochondrial from Drosophila yakuba (Fruit fly).